Consider the following 409-residue polypeptide: Probable type I inositol 1,4,5-trisphosphate 5-phosphatase (409 aa).

It belongs to the inositol 1,4,5-trisphosphate 5-phosphatase type I family.

It catalyses the reaction 1D-myo-inositol 1,4,5-trisphosphate + H2O = 1D-myo-inositol 1,4-bisphosphate + phosphate. The catalysed reaction is 1D-myo-inositol 1,3,4,5-tetrakisphosphate + H2O = 1D-myo-inositol 1,3,4-trisphosphate + phosphate. This chain is Probable type I inositol 1,4,5-trisphosphate 5-phosphatase (ipp-5), found in Caenorhabditis elegans.